The primary structure comprises 316 residues: Olfactory receptor 12D3 (316 aa).

The Extracellular segment spans residues 1-23 (MENVTTMNEFLLLGLTGVQELQP). Asn-3 carries N-linked (GlcNAc...) asparagine glycosylation. A helical membrane pass occupies residues 24–44 (FFFGIFLIIYLINLIGNGSIL). At 45–52 (VMVVLEPQ) the chain is on the cytoplasmic side. Residues 53–73 (LHSPMYFFLGNLSCLDISYSS) traverse the membrane as a helical segment. The Extracellular portion of the chain corresponds to 74 to 97 (VTLPKLLVNLVCSRRAISFLGCIT). Cys-95 and Cys-187 are disulfide-bonded. A helical membrane pass occupies residues 98-118 (QLHFFHFLGSTEAILLAIMAF). The Cytoplasmic portion of the chain corresponds to 119-137 (DRFVAICNPLRYTVIMNPQ). A helical membrane pass occupies residues 138 to 158 (VCILLAAAAWLISFFYALMHS). The Extracellular segment spans residues 159–195 (VMTAHLSFCGSQKLNHFFYDVKPLLELACSDTLLNQW). A helical transmembrane segment spans residues 196–215 (LLSIVTGSISMGAFFLTLLS). At 216 to 236 (CFYVIGFLLFKNRSCRILHKA) the chain is on the cytoplasmic side. The helical transmembrane segment at 237-257 (LSTCASHFMVVCLFYGPVGFT) threads the bilayer. Residues 258-270 (YIRPASATSMIQD) lie on the Extracellular side of the membrane. Residues 271–291 (RIMAIMYSAVTPVLNPLIYTL) form a helical membrane-spanning segment. Topologically, residues 292-316 (RNKEVMMALKKIFGRKLFKDWQQHH) are cytoplasmic.

It belongs to the G-protein coupled receptor 1 family.

Its subcellular location is the cell membrane. Functionally, odorant receptor. The sequence is that of Olfactory receptor 12D3 (OR12D3) from Homo sapiens (Human).